The chain runs to 1004 residues: ABC transporter G family member 25 (1004 aa).

The signal sequence occupies residues 1–27; that stretch reads MAASQLLAAAVAAAVFLAALLVPPARC. Residues 271 to 291 traverse the membrane as a helical segment; the sequence is ATALFGGILIVILSVVLLLVY. The tract at residues 343–373 is disordered; that stretch reads SDQLAASSNEARHATEGNGKRSKNRKKLAHA. Residues 352–361 show a composition bias toward basic and acidic residues; that stretch reads EARHATEGNG. Residues 362–372 are compositionally biased toward basic residues; the sequence is KRSKNRKKLAH. Positions 419–659 constitute an ABC transporter domain; sequence VVFKGLTLSI…FSSLGIKVPE (241 aa). 451-458 serves as a coordination point for ATP; sequence GPSGAGKT. The next 6 membrane-spanning stretches (helical) occupy residues 776–796, 804–824, 886–906, 907–927, 943–963, and 978–998; these read ATLQ…IGTI, FGVA…QLAA, LVFL…AIWF, ELGL…LVGT, WALE…WLIT, and FVLC…IALL.

Belongs to the ABC transporter superfamily. ABCG family. Eye pigment precursor importer (TC 3.A.1.204) subfamily.

The protein localises to the membrane. The polypeptide is ABC transporter G family member 25 (Oryza sativa subsp. japonica (Rice)).